The chain runs to 148 residues: MKAVIILGLVLLSVTVQGKIFERCELARTLKRLGLDGYRGISLANWVCLAKWESDYNTQATNYNPGDQSTDYGIFQINSHYWCNNGKTPGAVNACRISCNALLQDNIADAVTCAKRVVRDPQGIRAWVAWRNHCQNRDVSQYVQGCGV.

A signal peptide spans 1–18 (MKAVIILGLVLLSVTVQG). The C-type lysozyme domain occupies 19-148 (KIFERCELAR…VSQYVQGCGV (130 aa)). 4 disulfide bridges follow: C24–C146, C48–C134, C83–C99, and C95–C113. Residues E53 and D71 contribute to the active site.

It belongs to the glycosyl hydrolase 22 family. In terms of assembly, monomer.

It catalyses the reaction Hydrolysis of (1-&gt;4)-beta-linkages between N-acetylmuramic acid and N-acetyl-D-glucosamine residues in a peptidoglycan and between N-acetyl-D-glucosamine residues in chitodextrins.. Functionally, lysozymes have primarily a bacteriolytic function; those in tissues and body fluids are associated with the monocyte-macrophage system and enhance the activity of immunoagents. This Allenopithecus nigroviridis (Allen's swamp monkey) protein is Lysozyme C (LYZ).